Consider the following 239-residue polypeptide: MADETEIQAAAPAEAAPGAEGQGERRGRGGRGRGGNDRGGDRGRGRDGRGRRDDRRGSEEQGEELIEKLVHINRVSKTVKGGKRFGFAALVVVGDGKGRAGFGHGKAREVPEAISKATAAAKKAMVRVPLREGRTLHHDGNGHFGAGRVTVRTAPPGTGIIAGGPMRAIFESLGVADVVTKSVGTSNPYNMIRATFEALKDQTSPKSVSQRRGKKIADLLGRGGASAPVAEAEAAAITE.

The segment at 1–62 is disordered; that stretch reads MADETEIQAA…DDRRGSEEQG (62 aa). Low complexity predominate over residues 9 to 19; that stretch reads AAAPAEAAPGA. The span at 34–62 shows a compositional bias: basic and acidic residues; that stretch reads GGNDRGGDRGRGRDGRGRRDDRRGSEEQG. The 64-residue stretch at 65 to 128 folds into the S5 DRBM domain; it reads LIEKLVHINR…AAAKKAMVRV (64 aa).

This sequence belongs to the universal ribosomal protein uS5 family. As to quaternary structure, part of the 30S ribosomal subunit. Contacts proteins S4 and S8.

With S4 and S12 plays an important role in translational accuracy. Its function is as follows. Located at the back of the 30S subunit body where it stabilizes the conformation of the head with respect to the body. This Rhizorhabdus wittichii (strain DSM 6014 / CCUG 31198 / JCM 15750 / NBRC 105917 / EY 4224 / RW1) (Sphingomonas wittichii) protein is Small ribosomal subunit protein uS5.